The primary structure comprises 248 residues: tRNA (guanine-N(1)-)-methyltransferase (248 aa).

Residues Gly113 and 133-138 (VGDYVL) contribute to the S-adenosyl-L-methionine site.

This sequence belongs to the RNA methyltransferase TrmD family. Homodimer.

It localises to the cytoplasm. It carries out the reaction guanosine(37) in tRNA + S-adenosyl-L-methionine = N(1)-methylguanosine(37) in tRNA + S-adenosyl-L-homocysteine + H(+). Functionally, specifically methylates guanosine-37 in various tRNAs. This Shewanella sp. (strain W3-18-1) protein is tRNA (guanine-N(1)-)-methyltransferase.